The following is a 439-amino-acid chain: Fibulin-7 (439 aa).

The first 24 residues, methionine 1 to serine 24, serve as a signal peptide directing secretion. Residues leucine 28–glutamate 53 are a coiled coil. Residues valine 79–glycine 136 enclose the Sushi domain. Intrachain disulfides connect cysteine 81–cysteine 121, cysteine 107–cysteine 134, cysteine 140–cysteine 151, cysteine 145–cysteine 160, cysteine 162–cysteine 171, cysteine 228–cysteine 244, cysteine 240–cysteine 253, cysteine 255–cysteine 268, cysteine 274–cysteine 287, cysteine 281–cysteine 296, and cysteine 301–cysteine 318. Asparagine 124 carries an N-linked (GlcNAc...) asparagine glycan. Positions glycine 136–glutamine 172 constitute an EGF-like 1; calcium-binding domain. The region spanning aspartate 224–glutamate 269 is the EGF-like 2; calcium-binding domain. The EGF-like 3; calcium-binding domain maps to aspartate 270 to glutamate 319. N-linked (GlcNAc...) asparagine glycosylation is present at asparagine 307.

The protein belongs to the fibulin family. Interacts with heparin, FBLN1, FN1 and DSPP. Preferentially binds dental mesenchyme cells and odontoblasts but not dental epithelial cells or nondental cells. Binding requires a heparan sulfate-containing receptor on the cell surface as well as an integrin. Post-translationally, N-glycosylated.

The protein resides in the secreted. Its subcellular location is the extracellular space. It localises to the extracellular matrix. Functionally, an adhesion molecule that interacts with extracellular matrix molecules in developing teeth and may play important roles in differentiation and maintenance of odontoblasts as well as in dentin formation. The polypeptide is Fibulin-7 (FBLN7) (Homo sapiens (Human)).